The primary structure comprises 273 residues: Signal recognition particle subunit SEC65 (273 aa).

A disordered region spans residues 25–71 (PSLRTPIAPKITPKVVRSQDQENPAFLPGTNNNSNSNNNSSNEKEQL). Residues 55 to 65 (NNNSNSNNNSS) are compositionally biased toward low complexity.

As to quaternary structure, fungal signal recognition particle (SRP) complex consists of a 7S RNA molecule (scR1) and at least six protein subunits: SRP72, SRP68, SRP54, SEC65, SRP21 and SRP14.

The protein localises to the cytoplasm. Signal-recognition-particle (SRP) assembly has a crucial role in targeting secretory proteins to the rough endoplasmic reticulum (ER) membrane. SRP is required for the cotranslational protein translocation for ER import and preferentially recognizes strongly hydrophobic signal sequences. It is involved in targeting the nascent chain-ribosome (RNC) complex to the ER and is proposed to participate in the arrest of nascent chain elongation during membrane targeting. SEC65 is required for SRP integrity. This Saccharomyces cerevisiae (strain ATCC 204508 / S288c) (Baker's yeast) protein is Signal recognition particle subunit SEC65 (SEC65).